We begin with the raw amino-acid sequence, 609 residues long: UvrABC system protein C (609 aa).

Residues 16–94 (SSAGVYRMYD…IKQYMPKYNV (79 aa)) enclose the GIY-YIG domain. Positions 203–238 (KQVISELVAKMEEAAEQQAYEQAARFRDQIMALRRV) constitute a UVR domain.

It belongs to the UvrC family. Interacts with UvrB in an incision complex.

The protein resides in the cytoplasm. The UvrABC repair system catalyzes the recognition and processing of DNA lesions. UvrC both incises the 5' and 3' sides of the lesion. The N-terminal half is responsible for the 3' incision and the C-terminal half is responsible for the 5' incision. In Shewanella oneidensis (strain ATCC 700550 / JCM 31522 / CIP 106686 / LMG 19005 / NCIMB 14063 / MR-1), this protein is UvrABC system protein C.